Reading from the N-terminus, the 118-residue chain is UPF0102 protein CHY_1414 (118 aa).

This sequence belongs to the UPF0102 family.

This Carboxydothermus hydrogenoformans (strain ATCC BAA-161 / DSM 6008 / Z-2901) protein is UPF0102 protein CHY_1414.